The primary structure comprises 145 residues: Large ribosomal subunit protein uL15 (145 aa).

Positions 20–54 (GRGMASGKGKTATRGHKGQNSRSGGGVRPGFEGGQ) are disordered. The segment covering 42 to 52 (SGGGVRPGFEG) has biased composition (gly residues).

The protein belongs to the universal ribosomal protein uL15 family. Part of the 50S ribosomal subunit.

Functionally, binds to the 23S rRNA. The polypeptide is Large ribosomal subunit protein uL15 (Mycoplasma mycoides subsp. mycoides SC (strain CCUG 32753 / NCTC 10114 / PG1)).